The sequence spans 398 residues: MAKEKYDRSKPHVNIGTIGHVDHGKTTLTAAITTVLARRLPTSVNQPKDYASIDAAPEERERGITINTAHVEYETEKRHYAHIDAPGHADYVKNMITGAAQMDGAILVVASTDGPMPQTREHILLSRQVGVKHLIVFMNKVDLVDDEELLELVEMEIRDLLSEYDFPGDDLPVIQGSALKALEGDEKYEDIIMELMSTVDEYIPEPERDTDKPLLLPVEDVFSITGRGTVASGRIDRGTVRVNDEVEIVGIKEDIQKAVVTGVEMFRKQLDEGLAGDNVGVLLRGVQRDEIERGQVLAKPGSINPHTRFKGEVYILSKEEGGRHTPFFNNYRPQFYFRTTDVTGSIELPAGTEMVMPGDNVTIEVELIHPIAVEQGTTFSIREGGRTVGSGIVSEIEA.

Positions K10–E207 constitute a tr-type G domain. Positions G19 to T26 are G1. G19–T26 lines the GTP pocket. Position 26 (T26) interacts with Mg(2+). A G2 region spans residues G63–N67. The segment at D84–G87 is G3. Residues D84–H88 and N139–D142 contribute to the GTP site. Residues N139–D142 are G4. Residues S177–L179 are G5.

It belongs to the TRAFAC class translation factor GTPase superfamily. Classic translation factor GTPase family. EF-Tu/EF-1A subfamily. Monomer.

It is found in the cytoplasm. It catalyses the reaction GTP + H2O = GDP + phosphate + H(+). GTP hydrolase that promotes the GTP-dependent binding of aminoacyl-tRNA to the A-site of ribosomes during protein biosynthesis. The protein is Elongation factor Tu of Streptococcus agalactiae serotype V (strain ATCC BAA-611 / 2603 V/R).